Consider the following 550-residue polypeptide: MAETIRPISKIELRFKLADIKKPSSQIIVYCNSGDSKRFDLIGATERIDNKSEPFFNTTINIDYYFESVQKLYLLAINHNLKTLDFTKIDQLDVVGEFTPTIGDLISRDGKRLIGDIKDKDKITGKIEITAEEIYETGHNIILQLKGTKLDKKDLFSSDPYFKIYKSSPSGNSIVFESSVIKNNINPIFDPIVIRLQELNGGCMFRELTFEFWDHNDIVDDELIGSFRTNTDEILSGIIKEFPIINQKLKSKKSNYEHSGIINFIDSRILYKPTIQDFINGNGNGNGNGDGNCLIDLMVAIDCTESNGDQKLETSLHYNVKPHQNQYIRSLLALESQLLNNFGVKLEKRVEVFGFGAVINKHPNHNFRFHYIIDDRPNTLKAGISGVIELYDKAIPKIQFTSPTKISSIIEDATRYSLQDFHSTQLKYSILLILIDSDITDYESTVDEIVEASKAPLSIIFIGVGEYSFQNIPQLDGEKNGNIRLIGRFDRKQIRDNVHFISFKEFSINQIDFQNEILRKLPNQLTEFMEFKNYLPNGLSYTQTEIKKIK.

2 C2 domains span residues 1–115 (MAET…RLIG) and 123–246 (ITGK…PIIN). A VWFA domain is found at 296–521 (DLMVAIDCTE…DFQNEILRKL (226 aa)).

Belongs to the copine family.

The polypeptide is Copine-F (cpnF) (Dictyostelium discoideum (Social amoeba)).